We begin with the raw amino-acid sequence, 263 residues long: MGLKVFHWLNRRMHSNTEYCSIHGSKAMEDKDSVPHSVVEKDTEALLLHDVLLNGILAIGTLGHHVDSLCPVACIEEDDLFIMDDEKAIVEERDDEEPRNDQVKEDVALETEPCEPVWPIVEPAKMHSLSMKEDNFTCFVAEEILIREVEDGGGANIQERPLLMLEKVEKVRTTLADLFAAEVFSSSSPREYSCQDIIDVAVASTSKHASCMEKMHQKKPRKPTPKPLKATRKLSRVMRKMLGKKIHPEQLNGRSNAEGPLTA.

The IGT motif signature appears at 55–61 (GILAIGT). The interval 243–263 (GKKIHPEQLNGRSNAEGPLTA) is disordered.

This sequence belongs to the TAC family. Highly expressed in leaf sheath pulvinus. Expressed in shoot apical meristem and leaves.

In terms of biological role, involved in the regulation of leaf growth angle. Promotes horizontal shoot growth. The protein is Protein TILLER ANGLE CONTROL 1 of Zea mays (Maize).